The chain runs to 121 residues: Holo-[acyl-carrier-protein] synthase (121 aa).

Mg(2+) contacts are provided by Asp-5 and Glu-50.

Belongs to the P-Pant transferase superfamily. AcpS family. Requires Mg(2+) as cofactor.

It localises to the cytoplasm. It carries out the reaction apo-[ACP] + CoA = holo-[ACP] + adenosine 3',5'-bisphosphate + H(+). Its function is as follows. Transfers the 4'-phosphopantetheine moiety from coenzyme A to a Ser of acyl-carrier-protein. This is Holo-[acyl-carrier-protein] synthase from Sulfurimonas denitrificans (strain ATCC 33889 / DSM 1251) (Thiomicrospira denitrificans (strain ATCC 33889 / DSM 1251)).